We begin with the raw amino-acid sequence, 887 residues long: MQPTDPTKFTDKAWEAIVKSQDVAREYRSQYLETEHVMIALLREEGLGQVILERSDIDTEWVLKRLMDFARQQPRVPAGSELYCGRSLDALLDEANRLRQEEEDQFISIEHLLLAFVGDRRIGQRLFRALNCDRQQLAATVKAIRGAQKVLDQNPENKYAALEKYGRDLTEAARQGKLDPVIGRDEEIRRVIQVLSRRTKNNPVLIGEPGVGKTAIAEGLAQRIINGDVPESLKNRRLISLDLGSLVAGAKFRGDFEDRLKAVLHEVTHSEGQIVLFIDELHTVVGAGANQNSSMDASNLLKPMLARGELRCIGATTLDEYRKYIEKDAALERRFQQVYIGQPSVEDTISILRGLKDRYEIHHNVKITDSALVAAAMLSDRYISDRYLPDKAIDLVDEAAAKLKMEITTKPAELEALERRLRQLEMERLSLKQEESLPLSQAPLQATRDRLQRIEAEIAQLQPRQQAMQARWQAEKELLERINSLKEEEDQVKLQIEQAERDYNLNKAAQLKYGRLETLQRELEATEAQLLELQAAGGTFLRDQVTEADIAEIVAKWTGIPLQKLMASERQKLLQLEQVLHQRVIGQSDAVAAVAAAIRRARAGMKDPARPIGSFLFMGPTGVGKTELARALAEALFDDENALVRIDMSEYMEKHAVSRMIGAPPGYVGFDSGGQLTEAIRRRPYAVVLFDEVEKAHPEVFNVLLQVLDDGRITDSQGRTVDFRNTVIIMTSNLGSEHILDLAADDSRYEEMRQRVLQSAQKYFRPEFLNRIDDVILFHGLGRTELAQIAQIQLRRVEKLLADQKIHLRLTPAALDHLVAVGFDPVYGARPLKRAIQRELENPLAVKLLEEVFTPGDTILVDLVGSELTFRAVSPAGTGDRDTVSAS.

The Clp R domain maps to 6–147 (PTKFTDKAWE…AATVKAIRGA (142 aa)). 2 repeat regions span residues 9–73 (FTDK…ARQQ) and 84–147 (CGRS…IRGA). The tract at residues 160 to 342 (AALEKYGRDL…RRFQQVYIGQ (183 aa)) is NBD1. 207-214 (GEPGVGKT) contacts ATP. Residues 343 to 559 (PSVEDTISIL…IAEIVAKWTG (217 aa)) are linker. Residues 393–535 (IDLVDEAAAK…TEAQLLELQA (143 aa)) adopt a coiled-coil conformation. An NBD2 region spans residues 569 to 780 (ERQKLLQLEQ…RIDDVILFHG (212 aa)). 619–626 (GPTGVGKT) lines the ATP pocket. A C-terminal region spans residues 781–887 (LGRTELAQIA…TGDRDTVSAS (107 aa)).

The protein belongs to the ClpA/ClpB family. In terms of assembly, homohexamer. The oligomerization is ATP-dependent.

It is found in the cytoplasm. In terms of biological role, part of a stress-induced multi-chaperone system, it is involved in the recovery of the cell from heat-induced damage, in cooperation with DnaK, DnaJ and GrpE. Acts before DnaK, in the processing of protein aggregates. Protein binding stimulates the ATPase activity; ATP hydrolysis unfolds the denatured protein aggregates, which probably helps expose new hydrophobic binding sites on the surface of ClpB-bound aggregates, contributing to the solubilization and refolding of denatured protein aggregates by DnaK. This Thermosynechococcus vestitus (strain NIES-2133 / IAM M-273 / BP-1) protein is Chaperone protein ClpB 2 (clpB2).